We begin with the raw amino-acid sequence, 1073 residues long: 3-hydroxy-3-methylglutaryl-coenzyme A reductase 1 (1073 aa).

The next 8 helical transmembrane spans lie at F23–I43, F181–F201, F211–V231, H298–L318, S326–L346, I399–G419, G459–L479, and I498–L518. In terms of domain architecture, SSD spans D182 to L346. Positions S542 to T565 are enriched in low complexity. The disordered stretch occupies residues S542–E589. Residues P579 to E589 are compositionally biased toward acidic residues. Catalysis depends on E714, which acts as the Charge relay system. Residue S720–K726 participates in CoA binding. NADP(+) contacts are provided by residues S781–F783 and D808–S816. K848 acts as the Charge relay system in catalysis. A CoA-binding site is contributed by V877 to K879. Residue D924 is the Charge relay system of the active site. A helical membrane pass occupies residues I997–H1017. S1021–H1022 is a CoA binding site. H1022 functions as the Proton donor in the catalytic mechanism. The tract at residues H1025 to N1056 is disordered. N1026–R1027 contributes to the NADP(+) binding site. A compositionally biased stretch (low complexity) spans A1030–A1042. Residues S1046–S1055 show a composition bias toward polar residues.

It belongs to the HMG-CoA reductase family.

It is found in the endoplasmic reticulum membrane. It carries out the reaction (R)-mevalonate + 2 NADP(+) + CoA = (3S)-3-hydroxy-3-methylglutaryl-CoA + 2 NADPH + 2 H(+). The protein operates within metabolic intermediate biosynthesis; (R)-mevalonate biosynthesis; (R)-mevalonate from acetyl-CoA: step 3/3. Its function is as follows. HMG-CoA reductase; part of the first module of ergosterol biosynthesis pathway that includes the early steps of the pathway, conserved across all eukaryotes, and which results in the formation of mevalonate from acetyl-coenzyme A (acetyl-CoA). HMG1 catalyzes the reduction of hydroxymethylglutaryl-CoA (HMG-CoA) to mevalonate. The first module starts with the action of the cytosolic acetyl-CoA acetyltransferase ERG10 that catalyzes the formation of acetoacetyl-CoA. The hydroxymethylglutaryl-CoA synthase ERG13 then condenses acetyl-CoA with acetoacetyl-CoA to form HMG-CoA. The 3-hydroxy-3-methylglutaryl-coenzyme A (HMG-CoA) reductase HMG1 finally reduces HMG-CoA to produce mevalonate. This is 3-hydroxy-3-methylglutaryl-coenzyme A reductase 1 from Candida albicans (strain SC5314 / ATCC MYA-2876) (Yeast).